The sequence spans 394 residues: Major outer membrane porin, serovar B (394 aa).

Positions 1-22 (MKKLLKSVLVFAALSSASSLQA) are cleaved as a signal peptide.

It belongs to the chlamydial porin (CP) (TC 1.B.2) family. Part of a disulfide cross-linked outer membrane complex (COMC) composed of the major outer membrane porin (MOMP), the small cysteine-rich protein (OmcA) and the large cysteine-rich periplasmic protein (OmcB).

It localises to the cell outer membrane. In terms of biological role, in elementary bodies (EBs, the infectious stage, which is able to survive outside the host cell) provides the structural integrity of the outer envelope through disulfide cross-links with the small cysteine-rich protein and the large cysteine-rich periplasmic protein. It has been described in publications as the Sarkosyl-insoluble COMC (Chlamydia outer membrane complex), and serves as the functional equivalent of peptidoglycan. Its function is as follows. Permits diffusion of specific solutes through the outer membrane. The protein is Major outer membrane porin, serovar B (ompA) of Chlamydia trachomatis.